Reading from the N-terminus, the 277-residue chain is Large ribosomal subunit protein uL2 (277 aa).

Composition is skewed to basic residues over residues 210-219 and 259-277; these read RARWAGKRPQ and TRSK…RNKK. Residues 210-277 are disordered; sequence RARWAGKRPQ…KFIVRSRNKK (68 aa).

The protein belongs to the universal ribosomal protein uL2 family. Part of the 50S ribosomal subunit. Forms a bridge to the 30S subunit in the 70S ribosome.

One of the primary rRNA binding proteins. Required for association of the 30S and 50S subunits to form the 70S ribosome, for tRNA binding and peptide bond formation. It has been suggested to have peptidyltransferase activity; this is somewhat controversial. Makes several contacts with the 16S rRNA in the 70S ribosome. This chain is Large ribosomal subunit protein uL2, found in Ligilactobacillus salivarius (strain UCC118) (Lactobacillus salivarius).